Consider the following 142-residue polypeptide: Large ribosomal subunit protein uL11 (142 aa).

The protein belongs to the universal ribosomal protein uL11 family. As to quaternary structure, part of the ribosomal stalk of the 50S ribosomal subunit. Interacts with L10 and the large rRNA to form the base of the stalk. L10 forms an elongated spine to which L12 dimers bind in a sequential fashion forming a multimeric L10(L12)X complex. One or more lysine residues are methylated.

Its function is as follows. Forms part of the ribosomal stalk which helps the ribosome interact with GTP-bound translation factors. This Shewanella sp. (strain ANA-3) protein is Large ribosomal subunit protein uL11.